A 553-amino-acid chain; its full sequence is Methionine--tRNA ligase (553 aa).

The short motif at 12 to 22 is the 'HIGH' region element; sequence PYANSQLHLGH. Zn(2+) contacts are provided by Cys-144, Cys-147, Cys-157, and Cys-160. Positions 332–336 match the 'KMSKS' region motif; it reads KFSKS. Lys-335 is a binding site for ATP.

This sequence belongs to the class-I aminoacyl-tRNA synthetase family. MetG type 1 subfamily. In terms of assembly, monomer. Zn(2+) is required as a cofactor.

Its subcellular location is the cytoplasm. The catalysed reaction is tRNA(Met) + L-methionine + ATP = L-methionyl-tRNA(Met) + AMP + diphosphate. In terms of biological role, is required not only for elongation of protein synthesis but also for the initiation of all mRNA translation through initiator tRNA(fMet) aminoacylation. This chain is Methionine--tRNA ligase, found in Dehalococcoides mccartyi (strain CBDB1).